A 375-amino-acid chain; its full sequence is Chaperone protein DnaJ (375 aa).

The J domain maps to 5 to 69 (DYYEVLGVGK…QKRAHYDQFG (65 aa)). Residues 132–214 (GKETTIEIPR…CGGTGKVKKR (83 aa)) form a CR-type zinc finger. Positions 145, 148, 162, 165, 188, 191, 202, and 205 each coordinate Zn(2+). CXXCXGXG motif repeat units follow at residues 145–152 (CETCSGSG), 162–169 (CSHCGGSG), 188–195 (CHYCNGTG), and 202–209 (CSTCGGTG).

This sequence belongs to the DnaJ family. Homodimer. Requires Zn(2+) as cofactor.

The protein resides in the cytoplasm. In terms of biological role, participates actively in the response to hyperosmotic and heat shock by preventing the aggregation of stress-denatured proteins and by disaggregating proteins, also in an autonomous, DnaK-independent fashion. Unfolded proteins bind initially to DnaJ; upon interaction with the DnaJ-bound protein, DnaK hydrolyzes its bound ATP, resulting in the formation of a stable complex. GrpE releases ADP from DnaK; ATP binding to DnaK triggers the release of the substrate protein, thus completing the reaction cycle. Several rounds of ATP-dependent interactions between DnaJ, DnaK and GrpE are required for fully efficient folding. Also involved, together with DnaK and GrpE, in the DNA replication of plasmids through activation of initiation proteins. The polypeptide is Chaperone protein DnaJ (Bacillus licheniformis (strain ATCC 14580 / DSM 13 / JCM 2505 / CCUG 7422 / NBRC 12200 / NCIMB 9375 / NCTC 10341 / NRRL NRS-1264 / Gibson 46)).